Here is a 261-residue protein sequence, read N- to C-terminus: MICOS complex subunit Mic25 (261 aa).

Residue Gly2 is the site of N-myristoyl glycine attachment. Ser13, Ser31, and Ser33 each carry phosphoserine. 3 disordered regions span residues 39–59, 81–114, and 140–165; these read KDCS…PECS, CGPA…VKED, and TEKH…RLTR. Positions 109 to 202 form a coiled coil; that stretch reads SAVKEDLKKF…AELYKLSSQQ (94 aa). Residues 154-165 show a composition bias toward basic and acidic residues; the sequence is THEQQQSDRLTR. The CHCH domain maps to 220-261; the sequence is EPVCSGLQAQILRCYRDHLHEVLLCSDLAKAYQHCVSTARKG. Short sequence motifs (cx9C motif) lie at residues 223–233 and 244–254; these read CSGLQAQILRC and CSDLAKAYQHC. 2 disulfide bridges follow: Cys223–Cys254 and Cys233–Cys244.

It belongs to the MICOS complex subunit Mic19 family. Metazoan Mic25 subfamily. Component of the mitochondrial contact site and cristae organizing system (MICOS) complex, composed of at least MICOS10/MIC10, CHCHD3/MIC19, CHCHD6/MIC25, APOOL/MIC27, IMMT/MIC60, APOO/MIC23/MIC26 and MICOS13/MIC13. This complex was also known under the names MINOS or MitOS complex. The MICOS complex associates with mitochondrial outer membrane proteins SAMM50, MTX1 and MTX2 (together described as components of the mitochondrial outer membrane sorting assembly machinery (SAM) complex) and DNAJC11, mitochondrial inner membrane protein TMEM11 and with HSPA9. The MICOS and SAM complexes together with DNAJC11 are part of a large protein complex spanning both membranes termed the mitochondrial intermembrane space bridging (MIB) complex. Interacts with DISC1. Interacts with IMMT/MIC60.

It localises to the mitochondrion inner membrane. The protein localises to the mitochondrion. In terms of biological role, component of the MICOS complex, a large protein complex of the mitochondrial inner membrane that plays crucial roles in the maintenance of crista junctions, inner membrane architecture, and formation of contact sites to the outer membrane. The protein is MICOS complex subunit Mic25 (Chchd6) of Rattus norvegicus (Rat).